Consider the following 68-residue polypeptide: Large ribosomal subunit protein bL33c (68 aa).

The protein belongs to the bacterial ribosomal protein bL33 family.

The protein resides in the plastid. The chain is Large ribosomal subunit protein bL33c from Cuscuta reflexa (Southern Asian dodder).